The chain runs to 433 residues: GTPase Obg (433 aa).

The region spanning 2 to 160 (PTFVDQTKIE…RVLRLELKLL (159 aa)) is the Obg domain. The region spanning 161–334 (ADVGLVGFPS…LMNDTATLVE (174 aa)) is the OBG-type G domain. GTP contacts are provided by residues 167 to 174 (GFPSVGKS), 192 to 196 (FTTLT), 214 to 217 (DLPG), 284 to 287 (SQMD), and 315 to 317 (SSV). Residues serine 174 and threonine 194 each coordinate Mg(2+). Positions 355–433 (YKAPQRNEFM…IGKFVFEFVQ (79 aa)) constitute an OCT domain.

The protein belongs to the TRAFAC class OBG-HflX-like GTPase superfamily. OBG GTPase family. In terms of assembly, monomer. The cofactor is Mg(2+).

The protein localises to the cytoplasm. Its function is as follows. An essential GTPase which binds GTP, GDP and possibly (p)ppGpp with moderate affinity, with high nucleotide exchange rates and a fairly low GTP hydrolysis rate. Plays a role in control of the cell cycle, stress response, ribosome biogenesis and in those bacteria that undergo differentiation, in morphogenesis control. The polypeptide is GTPase Obg (Lactobacillus acidophilus (strain ATCC 700396 / NCK56 / N2 / NCFM)).